The chain runs to 768 residues: Ribonucleoside-diphosphate reductase large chain (768 aa).

Residues 7–8 (SK) and 13–19 (EKLGIDL) each bind ATP. GDP is bound by residues threonine 196 and serine 211. A disulfide bridge links cysteine 212 with cysteine 437. Residues 220 to 222 (DSI), lysine 237, and arginine 250 each bind dTTP. Position 420 (asparagine 420) interacts with GDP. The active-site Proton acceptor is the asparagine 420. The Cysteine radical intermediate role is filled by cysteine 422. Glutamate 424 contacts GDP. The active-site Proton acceptor is glutamate 424.

This sequence belongs to the ribonucleoside diphosphate reductase large chain family. Heterodimer of a large and a small subunit.

It carries out the reaction a 2'-deoxyribonucleoside 5'-diphosphate + [thioredoxin]-disulfide + H2O = a ribonucleoside 5'-diphosphate + [thioredoxin]-dithiol. With respect to regulation, under complex allosteric control mediated by deoxynucleoside triphosphates and ATP binding to separate specificity and activation sites on the large subunit. The type of nucleotide bound at the specificity site determines substrate preference. It seems probable that ATP makes the enzyme reduce CDP and UDP, dGTP favors ADP reduction and dTTP favors GDP reduction. Stimulated by ATP and inhibited by dATP binding to the activity site. Its function is as follows. Provides the precursors necessary for DNA synthesis. Catalyzes the biosynthesis of deoxyribonucleotides from the corresponding ribonucleotides. This is Ribonucleoside-diphosphate reductase large chain from Encephalitozoon cuniculi (strain GB-M1) (Microsporidian parasite).